A 99-amino-acid chain; its full sequence is Small ribosomal subunit protein eS24 (99 aa).

It belongs to the eukaryotic ribosomal protein eS24 family.

The chain is Small ribosomal subunit protein eS24 (rps2e) from Thermoplasma volcanium (strain ATCC 51530 / DSM 4299 / JCM 9571 / NBRC 15438 / GSS1).